Here is a 403-residue protein sequence, read N- to C-terminus: Phosphoglycerate kinase (403 aa).

Substrate-binding positions include 21 to 23 (DFN), Arg36, 59 to 62 (HLGR), Arg119, and Arg159. ATP-binding positions include Lys214, Gly301, Glu332, and 359–362 (GGDS).

It belongs to the phosphoglycerate kinase family. Monomer.

The protein localises to the cytoplasm. The enzyme catalyses (2R)-3-phosphoglycerate + ATP = (2R)-3-phospho-glyceroyl phosphate + ADP. It functions in the pathway carbohydrate degradation; glycolysis; pyruvate from D-glyceraldehyde 3-phosphate: step 2/5. This Lactobacillus delbrueckii subsp. lactis protein is Phosphoglycerate kinase.